The following is a 298-amino-acid chain: Putative S-adenosyl-L-methionine-dependent methyltransferase MAV_0778 (298 aa).

Residues Asp124 and 153 to 154 (DL) each bind S-adenosyl-L-methionine.

It belongs to the UPF0677 family.

Functionally, exhibits S-adenosyl-L-methionine-dependent methyltransferase activity. This is Putative S-adenosyl-L-methionine-dependent methyltransferase MAV_0778 from Mycobacterium avium (strain 104).